Consider the following 93-residue polypeptide: Protein S100-A8 (93 aa).

EF-hand domains are found at residues 12 to 47 and 46 to 81; these read IIDV…QYIR and IRKK…MGVA. Positions 17 and 27 each coordinate Zn(2+). D33 provides a ligand contact to Ca(2+). At C42 the chain carries S-nitrosocysteine. 4 residues coordinate Ca(2+): D59, N61, D63, and E70. The Zn(2+) site is built by H83 and H87.

This sequence belongs to the S-100 family. In terms of assembly, homodimer. Preferentially exists as a heterodimer or heterotetramer with S100A9 known as calprotectin (S100A8/A9). S100A8 interacts with AGER, ATP2A2 and with the heterodimeric complex formed by TLR4 and LY96. Interacts with GAPDH. Calprotectin (S100A8/9) interacts with CEACAM3 and tubulin filaments in a calcium-dependent manner. Heterotetrameric calprotectin (S100A8/A9) interacts with ANXA6 and associates with tubulin filaments in activated monocytes. S100A8 and calprotectin (S100A8/9) interact with NCF2/P67PHOX, RAC1 and RAC2. Calprotectin (S100A8/9) interacts with CYBA and CYBB. Calprotectin (S100A8/9) interacts with NOS2 to form the iNOS-S100A8/A9 transnitrosylase complex; induced by LDL(ox). Calprotectin (S100A8/9) interacts with CD69. As to expression, calprotectin (S100A8/9) is predominantly expressed in myeloid cells. Except for inflammatory conditions, the expression is restricted to a specific stage of myeloid differentiation since both proteins are expressed in circulating neutrophils and monocytes but are absent in normal tissue macrophages and lymphocytes. Under chronic inflammatory conditions, such as psoriasis and malignant disorders, also expressed in the epidermis. Found in high concentrations at local sites of inflammation or in the serum of patients with inflammatory diseases such as rheumatoid, cystic fibrosis, inflammatory bowel disease, Crohn's disease, giant cell arteritis, cystic fibrosis, Sjogren's syndrome, systemic lupus erythematosus, and progressive systemic sclerosis. Involved in the formation and deposition of amyloids in the aging prostate known as corpora amylacea inclusions. Strongly up-regulated in many tumors, including gastric, esophageal, colon, pancreatic, bladder, ovarian, thyroid, breast and skin cancers.

The protein localises to the secreted. It is found in the cytoplasm. The protein resides in the cytoskeleton. It localises to the cell membrane. Its activity is regulated as follows. Calprotectin (S100A8/A9) activity on TLR4 signaling is inhibited by paquinimod. Its function is as follows. S100A8 is a calcium- and zinc-binding protein which plays a prominent role in the regulation of inflammatory processes and immune response. It can induce neutrophil chemotaxis and adhesion. Predominantly found as calprotectin (S100A8/A9) which has a wide plethora of intra- and extracellular functions. The intracellular functions include: facilitating leukocyte arachidonic acid trafficking and metabolism, modulation of the tubulin-dependent cytoskeleton during migration of phagocytes and activation of the neutrophilic NADPH-oxidase. Also participates in regulatory T-cell differentiation together with CD69. Activates NADPH-oxidase by facilitating the enzyme complex assembly at the cell membrane, transferring arachidonic acid, an essential cofactor, to the enzyme complex and S100A8 contributes to the enzyme assembly by directly binding to NCF2/P67PHOX. The extracellular functions involve pro-inflammatory, antimicrobial, oxidant-scavenging and apoptosis-inducing activities. Its pro-inflammatory activity includes recruitment of leukocytes, promotion of cytokine and chemokine production, and regulation of leukocyte adhesion and migration. Acts as an alarmin or a danger associated molecular pattern (DAMP) molecule and stimulates innate immune cells via binding to pattern recognition receptors such as Toll-like receptor 4 (TLR4) and receptor for advanced glycation endproducts (AGER). Binding to TLR4 and AGER activates the MAP-kinase and NF-kappa-B signaling pathways resulting in the amplification of the pro-inflammatory cascade. Has antimicrobial activity towards bacteria and fungi and exerts its antimicrobial activity probably via chelation of Zn(2+) which is essential for microbial growth. Can induce cell death via autophagy and apoptosis and this occurs through the cross-talk of mitochondria and lysosomes via reactive oxygen species (ROS) and the process involves BNIP3. Can regulate neutrophil number and apoptosis by an anti-apoptotic effect; regulates cell survival via ITGAM/ITGB and TLR4 and a signaling mechanism involving MEK-ERK. Its role as an oxidant scavenger has a protective role in preventing exaggerated tissue damage by scavenging oxidants. Can act as a potent amplifier of inflammation in autoimmunity as well as in cancer development and tumor spread. The iNOS-S100A8/A9 transnitrosylase complex directs selective inflammatory stimulus-dependent S-nitrosylation of GAPDH and probably multiple targets such as ANXA5, EZR, MSN and VIM by recognizing a [IL]-x-C-x-x-[DE] motif; S100A8 seems to contribute to S-nitrosylation site selectivity. Functionally, (Microbial infection) Upon infection by human coronavirus SARS-CoV-2, may induce expansion of aberrant immature neutrophils in a TLR4-dependent manner. This Homo sapiens (Human) protein is Protein S100-A8.